A 174-amino-acid chain; its full sequence is MSWLCQKSINVFLSEEYLDKVSRYMNADKLLEENFEITQQQITVHCDCDHGDWQFCECDLEPLDQMEALDLTDIVRIWTNGGILSPKSLENLHDWIWYRINDPDNDPTDPEYELDWDNANRKILIDCDSFGVPQYQNFSVSVRGYLFHIHELEVIRPHIVDFLVHRKPVIVYYQ.

The protein belongs to the mimivirus L39/R874 family.

This is an uncharacterized protein from Acanthamoeba polyphaga (Amoeba).